The primary structure comprises 585 residues: Eukaryotic translation initiation factor 3 subunit D (585 aa).

Residues 110–130 (GGGTVFRGRGQRGVGQRGGRA) are compositionally biased toward gly residues. The segment at 110 to 152 (GGGTVFRGRGQRGVGQRGGRAGFQRVGAGRGQGGDRYYDNRSA) is disordered. An RNA gate region spans residues 300–314 (SIDLVTVNENAADAP). Residues 560–585 (VPPNTFEEDDEAAEEQEEKAEDESEE) form a disordered region. The segment covering 565–585 (FEEDDEAAEEQEEKAEDESEE) has biased composition (acidic residues).

It belongs to the eIF-3 subunit D family. In terms of assembly, component of the eukaryotic translation initiation factor 3 (eIF-3) complex.

Its subcellular location is the cytoplasm. Its function is as follows. mRNA cap-binding component of the eukaryotic translation initiation factor 3 (eIF-3) complex, which is involved in protein synthesis of a specialized repertoire of mRNAs and, together with other initiation factors, stimulates binding of mRNA and methionyl-tRNAi to the 40S ribosome. The eIF-3 complex specifically targets and initiates translation of a subset of mRNAs involved in cell proliferation. In the eIF-3 complex, eif3d specifically recognizes and binds the 7-methylguanosine cap of a subset of mRNAs. This is Eukaryotic translation initiation factor 3 subunit D from Aspergillus fumigatus (strain CBS 144.89 / FGSC A1163 / CEA10) (Neosartorya fumigata).